A 241-amino-acid chain; its full sequence is DNA repair protein RecO (241 aa).

Belongs to the RecO family.

Its function is as follows. Involved in DNA repair and RecF pathway recombination. This chain is DNA repair protein RecO, found in Orientia tsutsugamushi (strain Boryong) (Rickettsia tsutsugamushi).